The chain runs to 224 residues: Glutathione S-transferase D7 (224 aa).

The GST N-terminal domain maps to 2–83; the sequence is PNLDLYNFPM…YLVEKYGKPD (82 aa). Glutathione-binding positions include 53 to 55 and 67 to 69; these read HTI and ESR. The GST C-terminal domain maps to 90 to 210; sequence DPQKRALINQ…LESLQQGKKF (121 aa).

This sequence belongs to the GST superfamily. Delta family. Homodimer.

It carries out the reaction RX + glutathione = an S-substituted glutathione + a halide anion + H(+). Its function is as follows. Conjugation of reduced glutathione to a wide number of exogenous and endogenous hydrophobic electrophiles. May be involved in detoxification. This chain is Glutathione S-transferase D7, found in Drosophila melanogaster (Fruit fly).